A 385-amino-acid chain; its full sequence is tRNA-specific 2-thiouridylase MnmA (385 aa).

Residues 18-25 (AMSGGVDS) and Leu-44 each bind ATP. Cys-112 acts as the Nucleophile in catalysis. Cys-112 and Cys-209 are disulfide-bonded. Gly-136 provides a ligand contact to ATP. The interval 159–161 (RDQ) is interaction with tRNA. The Cysteine persulfide intermediate role is filled by Cys-209.

Belongs to the MnmA/TRMU family.

The protein localises to the cytoplasm. The catalysed reaction is S-sulfanyl-L-cysteinyl-[protein] + uridine(34) in tRNA + AH2 + ATP = 2-thiouridine(34) in tRNA + L-cysteinyl-[protein] + A + AMP + diphosphate + H(+). Functionally, catalyzes the 2-thiolation of uridine at the wobble position (U34) of tRNA, leading to the formation of s(2)U34. The polypeptide is tRNA-specific 2-thiouridylase MnmA (Methylorubrum populi (strain ATCC BAA-705 / NCIMB 13946 / BJ001) (Methylobacterium populi)).